The sequence spans 115 residues: Large ribosomal subunit protein bL19 (115 aa).

It belongs to the bacterial ribosomal protein bL19 family.

In terms of biological role, this protein is located at the 30S-50S ribosomal subunit interface and may play a role in the structure and function of the aminoacyl-tRNA binding site. This Desulforudis audaxviator (strain MP104C) protein is Large ribosomal subunit protein bL19.